The chain runs to 293 residues: Ribonuclease HIII (293 aa).

The RNase H type-2 domain maps to 78–293; that stretch reads LPLIGTDEVG…TEKAKKRLER (216 aa). Residues Asp84, Glu85, and Asp187 each contribute to the a divalent metal cation site.

It belongs to the RNase HII family. RnhC subfamily. Mn(2+) is required as a cofactor. The cofactor is Mg(2+).

The protein resides in the cytoplasm. The catalysed reaction is Endonucleolytic cleavage to 5'-phosphomonoester.. In terms of biological role, endonuclease that specifically degrades the RNA of RNA-DNA hybrids. The protein is Ribonuclease HIII of Streptococcus pneumoniae (strain Taiwan19F-14).